A 426-amino-acid polypeptide reads, in one-letter code: Enolase (426 aa).

Residue Gln-162 coordinates (2R)-2-phosphoglycerate. Catalysis depends on Glu-204, which acts as the Proton donor. The Mg(2+) site is built by Asp-241, Glu-284, and Asp-311. (2R)-2-phosphoglycerate-binding residues include Lys-336, Arg-365, Ser-366, and Lys-387. Lys-336 functions as the Proton acceptor in the catalytic mechanism.

Belongs to the enolase family. Component of the RNA degradosome, a multiprotein complex involved in RNA processing and mRNA degradation. Mg(2+) serves as cofactor.

It localises to the cytoplasm. The protein resides in the secreted. It is found in the cell surface. It catalyses the reaction (2R)-2-phosphoglycerate = phosphoenolpyruvate + H2O. It participates in carbohydrate degradation; glycolysis; pyruvate from D-glyceraldehyde 3-phosphate: step 4/5. Functionally, catalyzes the reversible conversion of 2-phosphoglycerate (2-PG) into phosphoenolpyruvate (PEP). It is essential for the degradation of carbohydrates via glycolysis. The chain is Enolase from Thioalkalivibrio sulfidiphilus (strain HL-EbGR7).